The chain runs to 372 residues: Ligninase H2 (372 aa).

Positions 1–21 (MAFKQLLAALSVALTLQVTQA) are cleaved as a signal peptide. Residues 22-28 (APNLDKR) constitute a propeptide that is removed on maturation. Cystine bridges form between cysteine 31-cysteine 44, cysteine 43-cysteine 314, cysteine 63-cysteine 149, and cysteine 278-cysteine 344. Catalysis depends on histidine 76, which acts as the Proton acceptor. Aspartate 77, glycine 95, aspartate 97, and serine 99 together coordinate Ca(2+). Heme b is bound at residue histidine 205. 5 residues coordinate Ca(2+): serine 206, aspartate 223, threonine 225, glutamine 228, and aspartate 230. The N-linked (GlcNAc...) asparagine glycan is linked to asparagine 286.

It belongs to the peroxidase family. Ligninase subfamily. Requires heme b as cofactor. It depends on Ca(2+) as a cofactor.

The catalysed reaction is 1-(3,4-dimethoxyphenyl)-2-(2-methoxyphenoxy)propane-1,3-diol + H2O2 = 3,4-dimethoxybenzaldehyde + guaiacol + glycolaldehyde + H2O. It catalyses the reaction 2 (3,4-dimethoxyphenyl)methanol + H2O2 = 2 (3,4-dimethoxyphenyl)methanol radical + 2 H2O. The protein operates within secondary metabolite metabolism; lignin degradation. Functionally, depolymerization of lignin. Catalyzes the C(alpha)-C(beta) cleavage of the propyl side chains of lignin. The polypeptide is Ligninase H2 (GLG4) (Phanerodontia chrysosporium (White-rot fungus)).